The chain runs to 380 residues: Queuine tRNA-ribosyltransferase (380 aa).

The active-site Proton acceptor is the aspartate 89. Substrate is bound by residues 89–93, aspartate 143, glutamine 187, and glycine 214; that span reads DSGGF. The segment at 245–251 is RNA binding; that stretch reads GVGKPED. Aspartate 264 functions as the Nucleophile in the catalytic mechanism. Positions 269–273 are RNA binding; important for wobble base 34 recognition; the sequence is TRNAR. Positions 302, 304, 307, and 333 each coordinate Zn(2+).

Belongs to the queuine tRNA-ribosyltransferase family. In terms of assembly, homodimer. Within each dimer, one monomer is responsible for RNA recognition and catalysis, while the other monomer binds to the replacement base PreQ1. The cofactor is Zn(2+).

The catalysed reaction is 7-aminomethyl-7-carbaguanine + guanosine(34) in tRNA = 7-aminomethyl-7-carbaguanosine(34) in tRNA + guanine. Its pathway is tRNA modification; tRNA-queuosine biosynthesis. In terms of biological role, catalyzes the base-exchange of a guanine (G) residue with the queuine precursor 7-aminomethyl-7-deazaguanine (PreQ1) at position 34 (anticodon wobble position) in tRNAs with GU(N) anticodons (tRNA-Asp, -Asn, -His and -Tyr). Catalysis occurs through a double-displacement mechanism. The nucleophile active site attacks the C1' of nucleotide 34 to detach the guanine base from the RNA, forming a covalent enzyme-RNA intermediate. The proton acceptor active site deprotonates the incoming PreQ1, allowing a nucleophilic attack on the C1' of the ribose to form the product. After dissociation, two additional enzymatic reactions on the tRNA convert PreQ1 to queuine (Q), resulting in the hypermodified nucleoside queuosine (7-(((4,5-cis-dihydroxy-2-cyclopenten-1-yl)amino)methyl)-7-deazaguanosine). The polypeptide is Queuine tRNA-ribosyltransferase (Proteus mirabilis (strain HI4320)).